The chain runs to 224 residues: Acyl-protein thioesterase 1 (224 aa).

Residues serine 116, aspartate 170, and histidine 203 each act as charge relay system in the active site.

This sequence belongs to the AB hydrolase superfamily. AB hydrolase 2 family.

It localises to the cytoplasm. It is found in the nucleus. It catalyses the reaction S-hexadecanoyl-L-cysteinyl-[protein] + H2O = L-cysteinyl-[protein] + hexadecanoate + H(+). Its function is as follows. Hydrolyzes fatty acids from S-acylated cysteine residues in proteins with a strong preference for palmitoylated G-alpha proteins over other acyl substrates. Mediates the deacylation of G-alpha proteins such as GPA1 in vivo, but has weak or no activity toward palmitoylated Ras proteins. Has weak lysophospholipase activity in vitro; however such activity may not exist in vivo. The chain is Acyl-protein thioesterase 1 from Schizosaccharomyces pombe (strain 972 / ATCC 24843) (Fission yeast).